A 363-amino-acid chain; its full sequence is Putative agmatine deiminase (363 aa).

The segment covering 1–10 has biased composition (polar residues); that stretch reads MTKQLSTSPK. The segment at 1–20 is disordered; that stretch reads MTKQLSTSPKQDGFRMPAEH. Catalysis depends on Cys-355, which acts as the Amidino-cysteine intermediate.

Belongs to the agmatine deiminase family.

The enzyme catalyses agmatine + H2O = N-carbamoylputrescine + NH4(+). In Photobacterium profundum (strain SS9), this protein is Putative agmatine deiminase.